The following is a 509-amino-acid chain: ATP synthase subunit alpha (509 aa).

Residue 169–176 (GDRQTGKT) participates in ATP binding.

Belongs to the ATPase alpha/beta chains family. In terms of assembly, F-type ATPases have 2 components, CF(1) - the catalytic core - and CF(0) - the membrane proton channel. CF(1) has five subunits: alpha(3), beta(3), gamma(1), delta(1), epsilon(1). CF(0) has three main subunits: a(1), b(2) and c(9-12). The alpha and beta chains form an alternating ring which encloses part of the gamma chain. CF(1) is attached to CF(0) by a central stalk formed by the gamma and epsilon chains, while a peripheral stalk is formed by the delta and b chains.

The protein resides in the cell inner membrane. The enzyme catalyses ATP + H2O + 4 H(+)(in) = ADP + phosphate + 5 H(+)(out). In terms of biological role, produces ATP from ADP in the presence of a proton gradient across the membrane. The alpha chain is a regulatory subunit. In Rhizobium leguminosarum bv. trifolii (strain WSM2304), this protein is ATP synthase subunit alpha.